The following is an 832-amino-acid chain: Sodium/hydrogen exchanger 3 (832 aa).

The signal sequence occupies residues 1-29 (MSGRGGCGPCWGLLLALVLALGALPWTQG). At 30–50 (AEQEHHDEIQGFQIVTFKWHH) the chain is on the extracellular side. The chain crosses the membrane as a helical span at residues 51 to 73 (VQDPYIIALWVLVASLAKIVFHL). The Cytoplasmic segment spans residues 74–81 (SHKVTSVV). A helical transmembrane segment spans residues 82–101 (PESALLIVLGLVLGGIVLAA). Over 102–110 (DHIASFTLT) the chain is Extracellular. Residues 111–128 (PTVFFFYLLPPIVLDAGY) form a helical membrane-spanning segment. The Cytoplasmic segment spans residues 129–131 (FMP). Residues 132 to 167 (NRLFFSNLGSILLYAVVGTVWNAATTGLSLYGVFLS) form a helical membrane-spanning segment. The a 1,2-diacyl-sn-glycero-3-phospho-(1D-myo-inositol) site is built by Gly140 and Ser141. At 168–180 (GIMGELKIGLLDF) the chain is on the extracellular side. A helical membrane pass occupies residues 181–202 (LLFGSLIAAVDPVAVLAVFEEV). Residues 203–204 (HV) lie on the Cytoplasmic side of the membrane. Residues 205–236 (NEVLFIIVFGESLLNDAVTVVLYNVFQSFVTL) form a helical membrane-spanning segment. Over 237 to 243 (GGDKVTG) the chain is Extracellular. Residues 244 to 278 (VDCVKGIVSFFVVSLGGTLVGVVFAFLLSLVTRFT) form a helical membrane-spanning segment. Residues 279–280 (KH) are Cytoplasmic-facing. A helical transmembrane segment spans residues 281-303 (VRVIEPGFVFIISYLSYLTSEML). Residues 304–305 (SL) lie on the Extracellular side of the membrane. A helical transmembrane segment spans residues 306–322 (SSILAITFCGICCQKYV). Topologically, residues 323 to 329 (KANISEQ) are cytoplasmic. Residues 330 to 358 (SATTVRYTMKMLASGAETIIFMFLGISAV) form a helical membrane-spanning segment. Residues 359–366 (DPLIWTWN) are Extracellular-facing. Residues 367-388 (TAFVLLTLLFVSVFRAIGVVLQ) form a helical membrane-spanning segment. Over 389-401 (TWLLNRYRMVQLE) the chain is Cytoplasmic. Residue Met397 participates in a 1,2-diacyl-sn-glycero-3-phospho-(1D-myo-inositol) binding. The chain crosses the membrane as a helical span at residues 402–425 (LIDQVVMSYGGLRGAVAFALVALL). The Extracellular segment spans residues 426–432 (DGNKVKE). The helical transmembrane segment at 433 to 466 (KNLFVSTTIIVVFFTVIFQGLTIKPLVQWLKVKR) threads the bilayer. Residues 467–832 (SEHREPKLNE…GAEHPESTHM (366 aa)) are Cytoplasmic-facing. Positions 496, 497, and 499 each coordinate a 1,2-diacyl-sn-glycero-3-phospho-(1D-myo-inositol). Phosphoserine is present on residues Ser554 and Ser562. The tract at residues 575–589 (RPSTVEASVSYLLRE) is interaction with EZR. Residues 590-667 (SASAVCLDMQ…RKRLESFKSA (78 aa)) form an interaction with NHERF4 region. The segment at 591–696 (ASAVCLDMQS…AQKRRNSSVP (106 aa)) is interaction with AHCYL1. A phosphoserine mark is found at Ser592 and Ser607. At Ser663 the chain carries Phosphoserine; by SGK1. Residues 664-706 (FKSAKLGLGQSKKATKHKRERERAQKRRNSSVPNGKLPLDSPA) form a disordered region. Over residues 676-692 (KATKHKRERERAQKRRN) the composition is skewed to basic residues. Ser719, Ser813, and Ser816 each carry phosphoserine.

Belongs to the monovalent cation:proton antiporter 1 (CPA1) transporter (TC 2.A.36) family. As to quaternary structure, homodimer. Found in the forms of complex and dynamic macromolecular complexes. Interacts with CHP1; this interaction increases trafficking and activity at the plasma membrane of SLC9A3. Interacts with CHP2 and SHANK2. Interacts with NHERF4 and interaction decreases in response to elevated calcium ion levels. Binds NHERF1 and NHERF2. Interacts with PDZK1 (via C-terminal PDZ domain). Interacts with AHCYL1; interaction is required for SLC9A3 activity. Interacts with EZR; interaction targets SLC9A3 to the apical membrane. Interacts with SNX27 (via PDZ domains); directs SLC9A3 membrane insertion from early endosomes to the plasma membrane. Post-translationally, phosphorylated by PKA, which inhibits activity. Phosphorylation at Ser-663 by SGK1 is associated with increased abundance at the cell membrane and activity. Phosphorylation at Ser-719 by CSNK2A1 regulates SLC9A3 activity through the formation of multiple signaling complexes. As to expression, intestinal and kidney specific. Most abundant in kidney cortex, followed equally by ileum and ascending colon, then kidney medulla and jejunum. Is absent from duodenum and descending colon.

It localises to the apical cell membrane. Its subcellular location is the cell membrane. It is found in the recycling endosome membrane. The protein localises to the early endosome membrane. It catalyses the reaction Na(+)(in) + H(+)(out) = Na(+)(out) + H(+)(in). Seems to switch between active and inactive modes in response to various stimuli. Activated directly or indirectly by membrane phosphatidylinositol (PIs). Regulated by a variety of auxiliary proteins, which facilitate the maturation, cell surface expression and function of the transporter. Inhibited specifically by the drug tenapanor. In terms of biological role, plasma membrane Na(+)/H(+) antiporter. Exchanges intracellular H(+) ions for extracellular Na(+) in 1:1 stoichiometry, playing a key role in salt and fluid absorption and pH homeostasis. Major apical Na(+)/H(+) exchanger in kidney and intestine playing an important role in renal and intestine Na(+) absorption and blood pressure regulation. The chain is Sodium/hydrogen exchanger 3 (SLC9A3) from Oryctolagus cuniculus (Rabbit).